Reading from the N-terminus, the 441-residue chain is tRNA (adenine(37)-N6)-methyltransferase (441 aa).

The region spanning 30-168 is the TsaA-like domain; the sequence is TEPVGYLESC…YIAEYDSPQN (139 aa). S-adenosyl-L-methionine-binding positions include 47-49, 90-91, Arg117, Leu127, and 148-151; these read PRQ, HK, and IHGT. Residues 179-192 show a composition bias toward polar residues; that stretch reads QNNQHTPNTVSQSD. 2 disordered regions span residues 179-231 and 264-284; these read QNNQ…EENY and SSVA…SEKG.

It belongs to the tRNA methyltransferase O family.

The catalysed reaction is N(6)-L-threonylcarbamoyladenosine(37) in tRNA + S-adenosyl-L-methionine = N(6)-methyl,N(6)-L-threonylcarbamoyladenosine(37) in tRNA + S-adenosyl-L-homocysteine + H(+). In terms of biological role, S-adenosyl-L-methionine-dependent methyltransferase responsible for the addition of the methyl group in the formation of N6-methyl-N6-threonylcarbamoyladenosine at position 37 (m(6)t(6)A37) of the tRNA anticodon loop of tRNA(Ser)(GCU). The methyl group of m(6)t(6)A37 may improve the efficiency of the tRNA decoding ability. The sequence is that of tRNA (adenine(37)-N6)-methyltransferase from Homo sapiens (Human).